The primary structure comprises 304 residues: Methionyl-tRNA formyltransferase (304 aa).

110-113 (SLLP) provides a ligand contact to (6S)-5,6,7,8-tetrahydrofolate.

This sequence belongs to the Fmt family.

The enzyme catalyses L-methionyl-tRNA(fMet) + (6R)-10-formyltetrahydrofolate = N-formyl-L-methionyl-tRNA(fMet) + (6S)-5,6,7,8-tetrahydrofolate + H(+). Functionally, attaches a formyl group to the free amino group of methionyl-tRNA(fMet). The formyl group appears to play a dual role in the initiator identity of N-formylmethionyl-tRNA by promoting its recognition by IF2 and preventing the misappropriation of this tRNA by the elongation apparatus. This Gluconobacter oxydans (strain 621H) (Gluconobacter suboxydans) protein is Methionyl-tRNA formyltransferase.